A 145-amino-acid polypeptide reads, in one-letter code: 3-dehydroquinate dehydratase (145 aa).

The active-site Proton acceptor is the tyrosine 23. The substrate site is built by asparagine 73, histidine 79, and aspartate 86. The active-site Proton donor is histidine 99. Residues 100–101 and arginine 110 contribute to the substrate site; that span reads LS.

Belongs to the type-II 3-dehydroquinase family. Homododecamer.

It catalyses the reaction 3-dehydroquinate = 3-dehydroshikimate + H2O. It functions in the pathway metabolic intermediate biosynthesis; chorismate biosynthesis; chorismate from D-erythrose 4-phosphate and phosphoenolpyruvate: step 3/7. Catalyzes a trans-dehydration via an enolate intermediate. The sequence is that of 3-dehydroquinate dehydratase from Desulfitobacterium hafniense (strain DSM 10664 / DCB-2).